A 238-amino-acid polypeptide reads, in one-letter code: DNA damage-regulated autophagy modulator protein 1 (238 aa).

6 helical membrane-spanning segments follow: residues 9-29, 53-73, 91-111, 116-136, 161-181, and 200-220; these read AFVP…SYVV, SGIF…TMYT, VFNL…GIVA, LAVP…GVVY, MVIS…ASLI, and VSAI…LTFI.

The protein belongs to the DRAM/TMEM150 family.

Its subcellular location is the lysosome membrane. Its function is as follows. Lysosomal modulator of autophagy that plays a central role in p53/TP53-mediated apoptosis. Not involved in p73/TP73-mediated autophagy. The sequence is that of DNA damage-regulated autophagy modulator protein 1 (DRAM1) from Homo sapiens (Human).